A 581-amino-acid polypeptide reads, in one-letter code: Invertase (581 aa).

A signal peptide spans 1-22 (MFLKYILASGICLVSLLSSTNA). Asparagine 37, asparagine 40, asparagine 46, asparagine 57, asparagine 62, and asparagine 79 each carry an N-linked (GlcNAc...) asparagine glycan. Substrate contacts are provided by residues 94 to 97 (FMND), glutamine 113, and 158 to 159 (FS). The active site involves aspartate 97. Residues asparagine 168 and asparagine 175 are each glycosylated (N-linked (GlcNAc...) asparagine). Substrate-binding positions include 227–228 (RD) and glutamate 280. Asparagine 322 is a glycosylation site (N-linked (GlcNAc...) asparagine). Tryptophan 366 contacts substrate. N-linked (GlcNAc...) asparagine glycosylation is found at asparagine 399, asparagine 409, asparagine 425, asparagine 446, asparagine 452, asparagine 519, and asparagine 569.

It belongs to the glycosyl hydrolase 32 family. In terms of processing, glycosylated; contains 67% carbohydrates. This is composed of equimolar amounts of mannose and galactose. There is also a small amount of glucosamine present.

The catalysed reaction is Hydrolysis of terminal non-reducing beta-D-fructofuranoside residues in beta-D-fructofuranosides.. This chain is Invertase (inv1), found in Schizosaccharomyces pombe (strain 972 / ATCC 24843) (Fission yeast).